The following is a 375-amino-acid chain: Chaperone protein DnaJ (375 aa).

A J domain is found at D5–G70. The CR-type zinc-finger motif lies at G135 to T213. C148, C151, C165, C168, C187, C190, C201, and C204 together coordinate Zn(2+). 4 CXXCXGXG motif repeats span residues C148–G155, C165–G172, C187–G194, and C201–G208.

The protein belongs to the DnaJ family. In terms of assembly, homodimer. It depends on Zn(2+) as a cofactor.

Its subcellular location is the cytoplasm. In terms of biological role, participates actively in the response to hyperosmotic and heat shock by preventing the aggregation of stress-denatured proteins and by disaggregating proteins, also in an autonomous, DnaK-independent fashion. Unfolded proteins bind initially to DnaJ; upon interaction with the DnaJ-bound protein, DnaK hydrolyzes its bound ATP, resulting in the formation of a stable complex. GrpE releases ADP from DnaK; ATP binding to DnaK triggers the release of the substrate protein, thus completing the reaction cycle. Several rounds of ATP-dependent interactions between DnaJ, DnaK and GrpE are required for fully efficient folding. Also involved, together with DnaK and GrpE, in the DNA replication of plasmids through activation of initiation proteins. This Chromobacterium violaceum (strain ATCC 12472 / DSM 30191 / JCM 1249 / CCUG 213 / NBRC 12614 / NCIMB 9131 / NCTC 9757 / MK) protein is Chaperone protein DnaJ.